Reading from the N-terminus, the 494-residue chain is Ectonucleoside triphosphate diphosphohydrolase 8 (494 aa).

Residues 1-8 (MRLSWKER) are Cytoplasmic-facing. Residues 9-29 (VFMVLLGVAAASGLTMLILIL) traverse the membrane as a helical segment. Over 30–465 (VKATNVLLPA…LTQWRAQSYS (436 aa)) the chain is Extracellular. A disulfide bond links C78 and C102. Residue E168 is the Proton acceptor of the active site. C245 and C291 are disulfide-bonded. Residues N299 and N303 are each glycosylated (N-linked (GlcNAc...) asparagine). Cysteines 328 and 334 form a disulfide. N-linked (GlcNAc...) asparagine glycosylation occurs at N362. A disulfide bridge connects residues C380 and C402. Residues 466–486 (IWIAGVVFAVLTLVAILGAAA) form a helical membrane-spanning segment. The Cytoplasmic portion of the chain corresponds to 487 to 494 (VQLFWTQD).

This sequence belongs to the GDA1/CD39 NTPase family. The cofactor is Ca(2+). Mg(2+) is required as a cofactor. In terms of processing, N-glycosylated. Present in liver, and at lower level in jejunum and kidney. Limited to the canalicular domain of hepatocytes (at protein level).

The protein resides in the cell membrane. It catalyses the reaction a ribonucleoside 5'-triphosphate + 2 H2O = a ribonucleoside 5'-phosphate + 2 phosphate + 2 H(+). In terms of biological role, canalicular ectonucleoside NTPDase responsible for the main hepatic NTPDase activity. Ectonucleoside NTPDases catalyze the hydrolysis of gamma- and beta-phosphate residues of nucleotides, playing a central role in concentration of extracellular nucleotides. Has activity toward ATP, ADP, UTP and UDP, but not toward AMP. The polypeptide is Ectonucleoside triphosphate diphosphohydrolase 8 (Entpd8) (Rattus norvegicus (Rat)).